We begin with the raw amino-acid sequence, 286 residues long: NAD kinase (286 aa).

Asp74 functions as the Proton acceptor in the catalytic mechanism. Residues 74–75 (DG), 148–149 (ND), Asp178, Ala186, 189–194 (TAYNLS), and Gln244 contribute to the NAD(+) site.

The protein belongs to the NAD kinase family. A divalent metal cation serves as cofactor.

The protein localises to the cytoplasm. The catalysed reaction is NAD(+) + ATP = ADP + NADP(+) + H(+). Involved in the regulation of the intracellular balance of NAD and NADP, and is a key enzyme in the biosynthesis of NADP. Catalyzes specifically the phosphorylation on 2'-hydroxyl of the adenosine moiety of NAD to yield NADP. This is NAD kinase from Campylobacter jejuni (strain RM1221).